The chain runs to 547 residues: MAAKEVKFGDAGRKKMLAGVNVLADAVKATLGPKGRNVIIEKSFGAPLITKDGVSVAKEIELKDRFENMGAQLVKDVASRANDDAGDGTTTATVLAQAIVNEGLKAVAAGMNPMDLKRGIDKATIAIVAELKKLSKPCTDTKAIAQVGTISANSDHSIGDIIAEAMEKVTKDGVITVEEGSGLENELSVVEGMQFDRGYLSPYFINKPDTMVAELDSPLLLLVDKKISNIREMLPVLEAVAKAGRPLLIVAEDVEGEALATLVVNNMRGIVKVAAVKAPGFGDRRKAMLQDIAVLTGGTVISEEIGLSLETTTLEHLGNAKRVILNKENTTIIDGAGVKTDIDSRISQIRQQIGDTSSDYDKEKLQERLAKLSGGVAVIKVGAGSEVEMKEKKARVEDALHATRAAVEEGVVPGGGVALVRSLQAIEGLKGDNADQDVGIALLRRAVEAPLRQIVANSGDEPSVVVDKVKQGSGNFGYNAASGEYGDMIEMGILDPAKVTRSALQAASSIASLMITTEAMIADVADEKAAGGGMPDMGGMGGMGGMM.

ATP-binding positions include 30 to 33 (TLGP), lysine 51, 87 to 91 (DGTTT), glycine 415, 479 to 481 (NAA), and aspartate 495.

Belongs to the chaperonin (HSP60) family. Forms a cylinder of 14 subunits composed of two heptameric rings stacked back-to-back. Interacts with the co-chaperonin GroES.

The protein localises to the cytoplasm. It catalyses the reaction ATP + H2O + a folded polypeptide = ADP + phosphate + an unfolded polypeptide.. In terms of biological role, together with its co-chaperonin GroES, plays an essential role in assisting protein folding. The GroEL-GroES system forms a nano-cage that allows encapsulation of the non-native substrate proteins and provides a physical environment optimized to promote and accelerate protein folding. This is Chaperonin GroEL from Pseudomonas syringae pv. tomato (strain ATCC BAA-871 / DC3000).